The sequence spans 469 residues: tRNA-2-methylthio-N(6)-dimethylallyladenosine synthase (469 aa).

The region spanning 22-142 is the MTTase N-terminal domain; sequence RKVFIKTYGC…LPEALRRAQQ (121 aa). The [4Fe-4S] cluster site is built by Cys-31, Cys-67, Cys-105, Cys-183, Cys-187, and Cys-190. One can recognise a Radical SAM core domain in the interval 169 to 401; it reads RARGVTAFLT…QALLLKQQQE (233 aa). Residues 404–466 form the TRAM domain; sequence ESCIGKEIDL…TNSLFAERAE (63 aa).

Belongs to the methylthiotransferase family. MiaB subfamily. As to quaternary structure, monomer. Requires [4Fe-4S] cluster as cofactor.

Its subcellular location is the cytoplasm. It catalyses the reaction N(6)-dimethylallyladenosine(37) in tRNA + (sulfur carrier)-SH + AH2 + 2 S-adenosyl-L-methionine = 2-methylsulfanyl-N(6)-dimethylallyladenosine(37) in tRNA + (sulfur carrier)-H + 5'-deoxyadenosine + L-methionine + A + S-adenosyl-L-homocysteine + 2 H(+). Its function is as follows. Catalyzes the methylthiolation of N6-(dimethylallyl)adenosine (i(6)A), leading to the formation of 2-methylthio-N6-(dimethylallyl)adenosine (ms(2)i(6)A) at position 37 in tRNAs that read codons beginning with uridine. The chain is tRNA-2-methylthio-N(6)-dimethylallyladenosine synthase from Rhizobium etli (strain CIAT 652).